The following is a 307-amino-acid chain: Agmatinase (307 aa).

The Mn(2+) site is built by histidine 128, aspartate 151, histidine 153, aspartate 155, aspartate 232, and aspartate 234.

The protein belongs to the arginase family. Agmatinase subfamily. It depends on Mn(2+) as a cofactor.

The catalysed reaction is agmatine + H2O = urea + putrescine. Its pathway is amine and polyamine biosynthesis; putrescine biosynthesis via agmatine pathway; putrescine from agmatine: step 1/1. Functionally, catalyzes the formation of putrescine from agmatine. This Neisseria meningitidis serogroup A / serotype 4A (strain DSM 15465 / Z2491) protein is Agmatinase.